The primary structure comprises 447 residues: MKGYEVNFDGLVGPTHHYAGLSFGNEASTKNRNNLSNPKLAAKQGLLKMKALADMGMKQGVLAPHERPHVPMLRRLGFTGDDISVVAQAMRYSPELLSSLSSASPMWTANAATVSPSADSQDERVHFTAANLNNKFHRSIEAETTSQVLQAIFKNERHFVHHEALPQVALFGDEGAANHNRLGGDYAKRGIQVFVYGQQHLNNGLPGPKRYPARQTREASEAIARLHRLDDAHTVFVQQNPDVIDQGVFHNDVIAVSNQQVLFHHQHAFLNQDQAFAEIRQKMASIGEDFISIEVPENRVTVDDAVATYLFNSQILTRPDGGMTIVVPEESRQNAAVWSYLNDMIQMGTPIDAIQVYDLRESMRNGGGPACLRLRVALNETELNAVNPKVLMNDQLFMTLNQWVDKHYRDRLAQEDLADPHLLMESRMALDELTKILGLGSVYPFQK.

Substrate contacts are provided by residues 19–28 (AGLSFGNEAS), Asn-110, and 137–138 (HR). Glu-174 is an active-site residue. Residue Arg-214 coordinates substrate. The active site involves His-250. Substrate is bound by residues Asp-252 and Asn-365. Cys-371 (nucleophile) is an active-site residue.

The protein belongs to the succinylarginine dihydrolase family. As to quaternary structure, homodimer.

The catalysed reaction is N(2)-succinyl-L-arginine + 2 H2O + 2 H(+) = N(2)-succinyl-L-ornithine + 2 NH4(+) + CO2. It participates in amino-acid degradation; L-arginine degradation via AST pathway; L-glutamate and succinate from L-arginine: step 2/5. Its function is as follows. Catalyzes the hydrolysis of N(2)-succinylarginine into N(2)-succinylornithine, ammonia and CO(2). This is N-succinylarginine dihydrolase from Acinetobacter baumannii (strain ACICU).